Consider the following 365-residue polypeptide: MSGNTFGNLFAVTNFGESHGPAIGCVIDGCPPGMALSEADIQGDLDRRRPGTSRHVTQRNEPDAVEILSGVYEGKTTGTPICLLIKNTDQRSKDYGNILDTFRPGHADYTYLHKYGLRDPRGGGRSSARLTAPMVAAGAVAKKWLFEKYGTTFRGCMAQIGEAMIPFESWEHVANNPFFAPVADVSNLENYMDALRKAGDSCGARIRVVASGVPVGLGEPLFDKLDADIAFAMMGINAVKGVEIGAGFASVTQRGTTHGDSLSPEGFMSNNAGGVLGGISTGQDLEVSIAIKPTSSIITPRQSIDTAGNPAEVVTKGRHDPCVGIRATPIAEAMLALVVMEHALRQRAQCGDVKVSTPDIMRSRG.

Positions 48 and 54 each coordinate NADP(+). Residues 125-127 (RSS), 237-238 (NA), Gly277, 292-296 (KPTSS), and Arg318 contribute to the FMN site.

The protein belongs to the chorismate synthase family. As to quaternary structure, homotetramer. It depends on FMNH2 as a cofactor.

It carries out the reaction 5-O-(1-carboxyvinyl)-3-phosphoshikimate = chorismate + phosphate. It participates in metabolic intermediate biosynthesis; chorismate biosynthesis; chorismate from D-erythrose 4-phosphate and phosphoenolpyruvate: step 7/7. Functionally, catalyzes the anti-1,4-elimination of the C-3 phosphate and the C-6 proR hydrogen from 5-enolpyruvylshikimate-3-phosphate (EPSP) to yield chorismate, which is the branch point compound that serves as the starting substrate for the three terminal pathways of aromatic amino acid biosynthesis. This reaction introduces a second double bond into the aromatic ring system. The protein is Chorismate synthase of Polaromonas naphthalenivorans (strain CJ2).